Consider the following 148-residue polypeptide: Large ribosomal subunit protein bL9 (148 aa).

Belongs to the bacterial ribosomal protein bL9 family.

In terms of biological role, binds to the 23S rRNA. The protein is Large ribosomal subunit protein bL9 of Thermobifida fusca (strain YX).